We begin with the raw amino-acid sequence, 739 residues long: Polyribonucleotide nucleotidyltransferase (739 aa).

Positions 514 and 520 each coordinate Mg(2+). A KH domain is found at 580 to 639 (PRIITVKIPVDKIGEVIGPKGKMINQIQEDTGADITIEDDGTIYIGAAQGSQAEAARATI). One can recognise an S1 motif domain in the interval 651–723 (GERYLGTVVK…SRGKLSLIPV (73 aa)).

It belongs to the polyribonucleotide nucleotidyltransferase family. Mg(2+) serves as cofactor.

It localises to the cytoplasm. The enzyme catalyses RNA(n+1) + phosphate = RNA(n) + a ribonucleoside 5'-diphosphate. Its function is as follows. Involved in mRNA degradation. Catalyzes the phosphorolysis of single-stranded polyribonucleotides processively in the 3'- to 5'-direction. The sequence is that of Polyribonucleotide nucleotidyltransferase from Streptomyces coelicolor (strain ATCC BAA-471 / A3(2) / M145).